We begin with the raw amino-acid sequence, 419 residues long: UDP-N-acetylglucosamine 1-carboxyvinyltransferase 2 (419 aa).

Position 24–25 (24–25 (KN)) interacts with phosphoenolpyruvate. R94 contacts UDP-N-acetyl-alpha-D-glucosamine. The active-site Proton donor is the C118. The residue at position 118 (C118) is a 2-(S-cysteinyl)pyruvic acid O-phosphothioketal. UDP-N-acetyl-alpha-D-glucosamine is bound by residues 123-127 (RPIDQ), D307, and I329.

It belongs to the EPSP synthase family. MurA subfamily.

Its subcellular location is the cytoplasm. It carries out the reaction phosphoenolpyruvate + UDP-N-acetyl-alpha-D-glucosamine = UDP-N-acetyl-3-O-(1-carboxyvinyl)-alpha-D-glucosamine + phosphate. It participates in cell wall biogenesis; peptidoglycan biosynthesis. Cell wall formation. Adds enolpyruvyl to UDP-N-acetylglucosamine. In Staphylococcus epidermidis (strain ATCC 12228 / FDA PCI 1200), this protein is UDP-N-acetylglucosamine 1-carboxyvinyltransferase 2.